The chain runs to 679 residues: MGKSRTKRFKRPQFSPIESCQAEAAAASNGTGDEEDDGPAAELLEKLQHPSAEVRECACAGLARLVQQRPALPDLARRDAVRRLGPLLLDSSLAVRETAAGALRNLSACGGFDVCDDMVAKDIMTPLVALLRECLSGLDSNEMSPQEKADKRNPVESIANEAVNVLWNVCECSGRAVSIFNKEGCLEIVLQYLRRFPTSIDLAVSVAYCLQTVTEDNPELLKSFDGTALRVLESALLCPVASMEYILLKTLVAGTIWNLKDIIPSKSQAEIINAILGALSEVLGMNTGNMVIQMKEAETQRLKTAAESEDILANANGDDLVEDDEMEEIPHKRKLRRKTFISDLLPPTDKELREAMALLTAQQTALEVIVNMCCSEDPSDDEWEELSSSDESEAFMENSFSECSGHLMSPLCLSHEIHSALTNCLIPEKVFEKTSSPNSVAVDICSKNPTWKPLIRKMNTIQCRALMCLQSLVSLLDIDHLGGAPALQTLAQHLSQILFSQPDFAKHDDFLEAISSALRALLQTMASKNIPQCMTPEQLMTLCREGIHSSSIGVRVNVVSILGITGSVLAKDDGTLDTLKTIGCFLLEVATKDPSLVVTGEALDALFDVFADGEAAEKASVQIKLLAALKEFQPVFKMKIRKEGRGKYSPDQLCVLDNVKMNLRRFIAYQETVEKRLTS.

Residues 1 to 11 show a composition bias toward basic residues; it reads MGKSRTKRFKR. Residues 1-40 form a disordered region; the sequence is MGKSRTKRFKRPQFSPIESCQAEAAAASNGTGDEEDDGPA. S15 bears the Phosphoserine mark. HEAT repeat units follow at residues 38-69 and 74-110; these read GPAA…VQQR and DLAR…SACG. A Phosphoserine modification is found at S144. The residue at position 339 (T339) is a Phosphothreonine.

This sequence belongs to the nuclear import and ribosome assembly adapter family. As to quaternary structure, component of a hexameric 5S RNP precursor complex, composed of 5S RNA, RRS1, RPF2/BXDC1, RPL5, RPL11 and HEATR3; this complex acts as a precursor for ribosome assembly.

In terms of biological role, plays a role in ribosome biogenesis and in nuclear import of the 60S ribosomal protein L5/large ribosomal subunit protein uL18 (RPL5). Required for proper erythrocyte maturation. This chain is HEAT repeat-containing protein 3 (Heatr3), found in Mus musculus (Mouse).